A 403-amino-acid polypeptide reads, in one-letter code: Creatinase (403 aa).

Residue His232 is part of the active site.

This sequence belongs to the peptidase M24 family. Creatinase subfamily. In terms of assembly, homodimer.

It catalyses the reaction creatine + H2O = sarcosine + urea. The protein is Creatinase of Flavobacterium sp. (strain U-188).